A 176-amino-acid polypeptide reads, in one-letter code: ATP-dependent protease subunit HslV (176 aa).

Residue threonine 5 is part of the active site. Residues serine 161, cysteine 164, and threonine 167 each coordinate Na(+).

It belongs to the peptidase T1B family. HslV subfamily. As to quaternary structure, a double ring-shaped homohexamer of HslV is capped on each side by a ring-shaped HslU homohexamer. The assembly of the HslU/HslV complex is dependent on binding of ATP.

The protein localises to the cytoplasm. It carries out the reaction ATP-dependent cleavage of peptide bonds with broad specificity.. Allosterically activated by HslU binding. Protease subunit of a proteasome-like degradation complex believed to be a general protein degrading machinery. This Caldanaerobacter subterraneus subsp. tengcongensis (strain DSM 15242 / JCM 11007 / NBRC 100824 / MB4) (Thermoanaerobacter tengcongensis) protein is ATP-dependent protease subunit HslV.